Reading from the N-terminus, the 74-residue chain is MSAFKLPDTSQSQLISTAELAKIISYKSQTIRKWLCQDKLPEGLPRPKQINGRHYWLRKDVLDFIDTFSVRESL.

This Escherichia coli (strain K12) protein is Protein YkgV.